A 1142-amino-acid chain; its full sequence is DNA-directed RNA polymerase subunit beta N-terminal section (1142 aa).

It belongs to the RNA polymerase beta chain family. In terms of assembly, in plastids the minimal PEP RNA polymerase catalytic core is composed of four subunits: alpha, beta, beta', and beta''. When a (nuclear-encoded) sigma factor is associated with the core the holoenzyme is formed, which can initiate transcription.

Its subcellular location is the plastid. It is found in the chloroplast. The catalysed reaction is RNA(n) + a ribonucleoside 5'-triphosphate = RNA(n+1) + diphosphate. In terms of biological role, DNA-dependent RNA polymerase catalyzes the transcription of DNA into RNA using the four ribonucleoside triphosphates as substrates. This chain is DNA-directed RNA polymerase subunit beta N-terminal section (rpoB1), found in Pleurastrum terricola (Filamentous green alga).